We begin with the raw amino-acid sequence, 252 residues long: Probable transcriptional regulatory protein A1E_02520 (252 aa).

It belongs to the TACO1 family.

Its subcellular location is the cytoplasm. This chain is Probable transcriptional regulatory protein A1E_02520, found in Rickettsia canadensis (strain McKiel).